We begin with the raw amino-acid sequence, 211 residues long: Protein-methionine-sulfoxide reductase heme-binding subunit MsrQ (211 aa).

4 helical membrane passes run Trp-10–Ile-30, Leu-82–Val-102, Pro-116–Thr-136, and Phe-153–Ser-173.

The protein belongs to the MsrQ family. Heterodimer of a catalytic subunit (MsrP) and a heme-binding subunit (MsrQ). Requires FMN as cofactor. Heme b serves as cofactor.

It localises to the cell inner membrane. Its function is as follows. Part of the MsrPQ system that repairs oxidized periplasmic proteins containing methionine sulfoxide residues (Met-O), using respiratory chain electrons. Thus protects these proteins from oxidative-stress damage caused by reactive species of oxygen and chlorine generated by the host defense mechanisms. MsrPQ is essential for the maintenance of envelope integrity under bleach stress, rescuing a wide series of structurally unrelated periplasmic proteins from methionine oxidation, including the primary periplasmic chaperone SurA and the lipoprotein Pal. MsrQ provides electrons for reduction to the reductase catalytic subunit MsrP, using the quinone pool of the respiratory chain. The polypeptide is Protein-methionine-sulfoxide reductase heme-binding subunit MsrQ (Escherichia coli O157:H7).